We begin with the raw amino-acid sequence, 60 residues long: MSQHLVPEAKNGLSKFKNEVANEMGVPFSDYNGDLSSRQCGSVGGEMVKRMVEKYEQSMK.

This sequence belongs to the alpha/beta-type SASP family. SASP are degraded in the first minutes of spore germination and provide amino acids for both new protein synthesis and metabolism.

Functionally, SASP are bound to spore DNA. They are double-stranded DNA-binding proteins that cause DNA to change to an a-like conformation. They protect the DNA backbone from chemical and enzymatic cleavage and are thus involved in dormant spore's high resistance to UV light. This is Small, acid-soluble spore protein C2 (sspC2) from Clostridium perfringens (strain 13 / Type A).